The sequence spans 1367 residues: MKKIENLKWKNVSFKSLEIDPDAGVVLVSVEKFSEEIEDLVRLLEKKTRFRVIVNGVQKSNGDLRGKILSLLNGNVPYIKDVVFEGNRLILKVLGDFARDRIASKLRSTKKQLDELLPPGTEIMLEVVEPPEDLLKKEVPQPEKREEPKGEELKIEDENHIFGQKPRKIVFTPSKIFEYNKKTSVKGKIFKIEKIEGKRTVLLIYLTDGEDSLICKVFNDVEKVEGKVSVGDVIVATGDLLLENGEPTLYVKGITKLPEAKRMDKSPVKRVELHAHTKFSDQDAITDVNEYVKRAKEWGFPAIALTDHGNVQAIPYFYDAAKEAGIKPIFGIEAYLVSDVEPVIRNLSDDSTFGDATFVVLDFETTGLDPQVDEIIEIGAVKIQGGQIVDEYHTLIKPSREISRKSSEITGITQEMLENKRSIEEVLPEFLGFLEDSIIVAHNANFDYRFLRLWIKKVMGLDWERPYIDTLALAKSLLKLRSYSLDSVVEKLGLGPFRHHRALDDARVTAQVFLRFVEMMKKIGITKLSEMEKLKDTIDYTALKPFHCTILVQNKKGLKNLYKLVSDSYIKYFYGVPRILKSELIENREGLLVGSACISGELGRAALEGASDSELEEIAKFYDYIEVMPLDVIAEDEEDLDRERLKEVYRKLYRIAKKLNKFVVMTGDVHFLDPEDARGRAALLAPQGNRNFENQPALYLRTTEEMLEKAIEIFEDEEIAREVVIENPNRIADMIEEVQPLEKKLHPPIIENADEIVRNLTMKRAYEIYGDPLPEIVQKRVEKELNAIINHGYAVLYLIAQELVQKSMSDGYVVGSRGSVGSSLVANLLGITEVNPLPPHYRCPECKYFEVVEDDRYGAGYDLPNKNCPRCGAPLRKDGHGIPFETFMGFEGDKVPDIDLNFSGEYQERAHRFVEELFGKDHVYRAGTINTIAERSAVGYVRSYEEKTGKKLRKAEMERLVSMITGVKRTTGQHPGGLMIIPKDKEVYDFTPIQYPANDRNAGVFTTHFAYETIHDDLVKIDALGHDDPTFIKMLKDLTGIDPMTIPMDDPDTLAIFSSVKPLGVDPVELESDVGTYGIPEFGTEFVRGMLVETRPKSFAELVRISGLSHGTDVWLNNARDWINLGYAKLSEVISCRDDIMNFLIHKGMEPSLAFKIMENVRKGKGITEEMESEMRRLKVPEWFIESCKRIKYLFPKAHAVAYVSMAFRIAYFKVHYPLQFYAAYFTIKGDQFDPVLVLRGKEAIKRRLRELKAMPAKDAQKKNEVSVLEVALEMILRGFSFLPPDIFKSDAKKFLIEGNSLRIPFNKLPGLGDSVAESIIRAREEKPFTSVEDLMKRTKVNKNHIELMKSLGVLGDLPETEQFTLF.

The Exonuclease domain maps to 358-513 (FVVLDFETTG…DDARVTAQVF (156 aa)).

This sequence belongs to the DNA polymerase type-C family. PolC subfamily.

The protein resides in the cytoplasm. It catalyses the reaction DNA(n) + a 2'-deoxyribonucleoside 5'-triphosphate = DNA(n+1) + diphosphate. Required for replicative DNA synthesis. This DNA polymerase also exhibits 3' to 5' exonuclease activity. This chain is DNA polymerase III PolC-type, found in Thermotoga maritima (strain ATCC 43589 / DSM 3109 / JCM 10099 / NBRC 100826 / MSB8).